The following is a 332-amino-acid chain: tRNA N6-adenosine threonylcarbamoyltransferase (332 aa).

Residues His107 and His111 each coordinate Fe cation. Substrate is bound by residues 129-133 (LVSGG), Asp162, Gly175, and Asn267. Asp295 provides a ligand contact to Fe cation.

The protein belongs to the KAE1 / TsaD family. It depends on Fe(2+) as a cofactor.

It localises to the cytoplasm. The enzyme catalyses L-threonylcarbamoyladenylate + adenosine(37) in tRNA = N(6)-L-threonylcarbamoyladenosine(37) in tRNA + AMP + H(+). In terms of biological role, required for the formation of a threonylcarbamoyl group on adenosine at position 37 (t(6)A37) in tRNAs that read codons beginning with adenine. Is involved in the transfer of the threonylcarbamoyl moiety of threonylcarbamoyl-AMP (TC-AMP) to the N6 group of A37, together with TsaE and TsaB. TsaD likely plays a direct catalytic role in this reaction. This chain is tRNA N6-adenosine threonylcarbamoyltransferase, found in Campylobacter hominis (strain ATCC BAA-381 / DSM 21671 / CCUG 45161 / LMG 19568 / NCTC 13146 / CH001A).